Here is a 155-residue protein sequence, read N- to C-terminus: Ribosomal RNA large subunit methyltransferase H (155 aa).

S-adenosyl-L-methionine is bound by residues Leu72, Gly103, and 122–127 (LSTMTL).

Belongs to the RNA methyltransferase RlmH family. As to quaternary structure, homodimer.

It localises to the cytoplasm. It carries out the reaction pseudouridine(1915) in 23S rRNA + S-adenosyl-L-methionine = N(3)-methylpseudouridine(1915) in 23S rRNA + S-adenosyl-L-homocysteine + H(+). Functionally, specifically methylates the pseudouridine at position 1915 (m3Psi1915) in 23S rRNA. The chain is Ribosomal RNA large subunit methyltransferase H from Nitrosomonas eutropha (strain DSM 101675 / C91 / Nm57).